We begin with the raw amino-acid sequence, 93 residues long: Small ribosomal subunit protein uS19 (93 aa).

It belongs to the universal ribosomal protein uS19 family.

Protein S19 forms a complex with S13 that binds strongly to the 16S ribosomal RNA. This chain is Small ribosomal subunit protein uS19, found in Leptospira interrogans serogroup Icterohaemorrhagiae serovar copenhageni (strain Fiocruz L1-130).